We begin with the raw amino-acid sequence, 539 residues long: Cytochrome c oxidase subunit 1 homolog (539 aa).

2 helical membrane-spanning segments follow: residues 28–48 and 75–95; these read LFAA…LLLL and GVMA…VVAL. Histidine 117 provides a ligand contact to heme b. 11 helical membrane-spanning segments follow: residues 118-138, 154-174, 187-207, 214-234, 265-285, 298-318, 330-350, 368-388, 402-422, 443-463, and 498-518; these read TSAV…FYVV, FVFW…LLGI, VDLW…GTIL, ISVA…LHIV, GHNA…YYFI, LSII…PHHL, LGMV…INGL, MMVM…MMSI, IGHV…GAIY, HFWL…VAGI, and LGGL…TMTI. Cu cation contacts are provided by histidine 266, histidine 316, and histidine 317. Heme b contacts are provided by histidine 404 and histidine 406.

Belongs to the heme-copper respiratory oxidase family. Requires Cu(2+) as cofactor. Heme b serves as cofactor.

The protein localises to the cell membrane. The catalysed reaction is 4 Fe(II)-[cytochrome c] + O2 + 8 H(+)(in) = 4 Fe(III)-[cytochrome c] + 2 H2O + 4 H(+)(out). Its pathway is energy metabolism; oxidative phosphorylation. Its function is as follows. Cytochrome c oxidase is the component of the respiratory chain that catalyzes the reduction of oxygen to water. Subunits 1-3 form the functional core of the enzyme complex. Co I is the catalytic subunit of the enzyme. Electrons originating in cytochrome c or a quinol are transferred to the bimetallic center formed by a high-spin heme and copper B. In Agrobacterium tumefaciens (strain T37), this protein is Cytochrome c oxidase subunit 1 homolog (fixN).